Reading from the N-terminus, the 990-residue chain is F-box/LRR-repeat protein 15 (990 aa).

Positions 190 to 236 (FEVHIDLTDDLLHMVFSFLNHVDLCRSAMVCRQWRVASAHEDFWRVL) constitute an F-box domain. 22 LRR repeats span residues 237–258 (NFEN…YPNA), 280–303 (LRNL…ALGE), 317–341 (LGNG…KCRV), 348–373 (CPQL…LLQL), 397–423 (LESL…CANL), 441–465 (LPML…WIAN), 466–477 (SPALEVLELDNC), 478–503 (NLLT…KFTD), 519–542 (CPAL…KQEN), 550–574 (CHSL…IFSD), 589–612 (CESL…GCRA), 614–633 (TSLE…GCDH), 640–652 (QPVA…LGIC), 653–678 (PKLS…VLSE), 734–756 (LPNL…VFKS), 758–782 (IQLK…LYKE), 785–809 (LPAL…LLAC), 813–839 (LTHL…LFDY), 882–893 (FYHLSTLNLSLS), 894–914 (VNLK…LSNC), 915–937 (CSLE…SCNM), and 949–973 (CSSL…KFRT).

This is F-box/LRR-repeat protein 15 (FBL15) from Arabidopsis thaliana (Mouse-ear cress).